A 215-amino-acid chain; its full sequence is MGKYCASLGVLKGPWDQVFAAFWQRYPNPYSKHVLTEDIVHREVTADHKLLSRRLLTKTNRMPRWAERFFPANVAHNVYIVEDSIVDPKNRTMTTFTWNINHARLMAVEERCVYRVNPENSSWTEVKREAWVSSSLFGVSRAVQEFGLARFKSNVTKSTKGFEYVLARMQGEAPSKTLVETAKEATEKAKETALAATEKAKDLASKAATKKKQFV.

A PRELI/MSF1 domain is found at 36–174 (TEDIVHREVT…VLARMQGEAP (139 aa)).

As to quaternary structure, forms a complex with TRIAP1 in the mitochondrion intermembrane space. In terms of tissue distribution, expressed within the blood islands and in the liver.

It localises to the mitochondrion. The protein resides in the mitochondrion intermembrane space. It catalyses the reaction a 1,2-diacyl-sn-glycero-3-phosphate(in) = a 1,2-diacyl-sn-glycero-3-phosphate(out). In terms of biological role, involved in the modulation of the mitochondrial apoptotic pathway by ensuring the accumulation of cardiolipin (CL) in mitochondrial membranes. The TRIAP1:PRELID1 complex probably functions as a PA transporter across the mitochondrion intermembrane space to provide PA for CL synthesis in the inner membrane. May be involved in hematopoiesis during avian development. The chain is PRELI domain-containing protein 1, mitochondrial (PRELID1) from Gallus gallus (Chicken).